The following is a 114-amino-acid chain: Lymphotactin (114 aa).

Residues 1–21 form the signal peptide; it reads MRLLLLTFLGVCCFAAWVVEG. A disulfide bond links Cys32 and Cys69. Positions 87–114 are disordered; that stretch reads RASASKSKAETIPTQAQRSASTAVTLTG. The segment covering 98-114 has biased composition (polar residues); sequence IPTQAQRSASTAVTLTG.

This sequence belongs to the intercrine gamma family.

Its subcellular location is the secreted. Functionally, chemotactic activity for lymphocytes but not for monocytes or neutrophils. In thymus, mediates medullary accumulation of thymic dendritic cells and contributes to regulatoy T cell development, playing a role in self-tolerance establishment. The chain is Lymphotactin (Xcl1) from Rattus norvegicus (Rat).